The primary structure comprises 379 residues: V-type proton ATPase subunit S1 (379 aa).

The N-terminal stretch at 1–17 (MLWKSLIALCVIGAAVA) is a signal peptide. Residues 18 to 333 (EQTPVFLWGA…WDCVGFVTPG (316 aa)) are Lumenal-facing. N-linked (GlcNAc...) asparagine glycosylation is found at Asn225 and Asn284. The cysteines at positions 282 and 326 are disulfide-linked. The helical transmembrane segment at 334 to 354 (ILMGLFVVALLLVIMFVGVCW) threads the bilayer. The Cytoplasmic portion of the chain corresponds to 355-379 (MMDINTMDRFDDPKGKTITINAAAE).

The protein belongs to the vacuolar ATPase subunit S1 family. In terms of assembly, accessory component of the multisubunit proton-transporting vacuolar (V)-ATPase protein pump. May interact with ATP6AP2.

The protein localises to the endoplasmic reticulum membrane. Functionally, accessory subunit of the proton-transporting vacuolar (V)-ATPase protein pump, which is required for luminal acidification of secretory vesicles. The polypeptide is V-type proton ATPase subunit S1 (Drosophila melanogaster (Fruit fly)).